The chain runs to 67 residues: MKQPSLDELEKRAGSKYALAVLAAKRARMLTESQFAAQYPKGTKPVTIALMEIAAGKIKYEWGKKKA.

This sequence belongs to the RNA polymerase subunit omega family. As to quaternary structure, the RNAP catalytic core consists of 2 alpha, 1 beta, 1 beta' and 1 omega subunit. When a sigma factor is associated with the core the holoenzyme is formed, which can initiate transcription.

It carries out the reaction RNA(n) + a ribonucleoside 5'-triphosphate = RNA(n+1) + diphosphate. Its function is as follows. Promotes RNA polymerase assembly. Latches the N- and C-terminal regions of the beta' subunit thereby facilitating its interaction with the beta and alpha subunits. The protein is DNA-directed RNA polymerase subunit omega of Moorella thermoacetica (strain ATCC 39073 / JCM 9320).